The primary structure comprises 229 residues: MGQKINPIGLRIGVIKDWQSNWYADKNYTELVHEDIKIREYIENKLFNADVSAIQIDRAANRIKVTLHTAKPGMVIGKGGSGVEKLRSDIENLTGKKVHINVMEVKTPELDAHLAAKSIAIALERRVAFRRAMKQAVGRAMRQGAKGIKVMCSGRLGGAEMSRTEWYTEGNVPLQTLRADIDYGMVEANTAYGQIGVKCWINKGEVLPEVDENEETKEENKEKSEEKSE.

A KH type-2 domain is found at 38 to 106 (IREYIENKLF…KVHINVMEVK (69 aa)). Residues 208-217 (PEVDENEETK) are compositionally biased toward acidic residues. Positions 208 to 229 (PEVDENEETKEENKEKSEEKSE) are disordered. Residues 218–229 (EENKEKSEEKSE) show a composition bias toward basic and acidic residues.

It belongs to the universal ribosomal protein uS3 family. Part of the 30S ribosomal subunit. Forms a tight complex with proteins S10 and S14.

Binds the lower part of the 30S subunit head. Binds mRNA in the 70S ribosome, positioning it for translation. The sequence is that of Small ribosomal subunit protein uS3 from Natranaerobius thermophilus (strain ATCC BAA-1301 / DSM 18059 / JW/NM-WN-LF).